A 461-amino-acid chain; its full sequence is Phosphoglucosamine mutase (461 aa).

Catalysis depends on serine 107, which acts as the Phosphoserine intermediate. Positions 107, 254, 256, and 258 each coordinate Mg(2+). Phosphoserine is present on serine 107.

It belongs to the phosphohexose mutase family. Requires Mg(2+) as cofactor. Post-translationally, activated by phosphorylation.

It catalyses the reaction alpha-D-glucosamine 1-phosphate = D-glucosamine 6-phosphate. In terms of biological role, catalyzes the conversion of glucosamine-6-phosphate to glucosamine-1-phosphate. The sequence is that of Phosphoglucosamine mutase from Bifidobacterium longum (strain DJO10A).